A 278-amino-acid polypeptide reads, in one-letter code: Gap junction delta-3 protein (278 aa).

The Cytoplasmic segment spans residues 1–24 (MGEWAFLGSLLDAVQLQSPLVGRL). A helical membrane pass occupies residues 25-45 (WLVIMLIFRILVLATVGGAVF). The Extracellular portion of the chain corresponds to 46–76 (EDEQEEFVCNTLQPGCRQTCYDRAFPVSHYR). Residues 77–97 (FWLFHILLLSAPPVLFVIYSM) form a helical membrane-spanning segment. Residues 98 to 136 (HQASKEAGGAQLAPPCARGRAEAPCSPCALRARRARRCY) are Cytoplasmic-facing. Residues 137-157 (LLSVALRLLAELAFLGGQALL) traverse the membrane as a helical segment. The Extracellular portion of the chain corresponds to 158–188 (YGFRVDPHYACAGPPCPHTVDCFVSRPTEKT). Residues 189–209 (VFVVFYFAVGLLSALLSVAEL) form a helical membrane-spanning segment. The Cytoplasmic segment spans residues 210–278 (GHLLWKGRQR…LATVRQDLAI (69 aa)). Positions 223–278 (LPPPPPSPSLPSQRGDPDPFGPPAYAHRSPAGDSEGEGGSGHSKASLATVRQDLAI) are disordered.

This sequence belongs to the connexin family. Delta-type subfamily. As to quaternary structure, a connexon is composed of a hexamer of connexins.

Its subcellular location is the cell membrane. The protein resides in the cell junction. It localises to the gap junction. Its function is as follows. One gap junction consists of a cluster of closely packed pairs of transmembrane channels, the connexons, through which materials of low MW diffuse from one cell to a neighboring cell. This Mus musculus (Mouse) protein is Gap junction delta-3 protein (Gjd3).